The primary structure comprises 142 residues: Probable transport accessory protein MmpS5 (142 aa).

Residues 7–26 (RAWIPLLILVVVAIAGFTVQ) form a helical membrane-spanning segment.

The protein belongs to the MmpS family.

The protein resides in the cell membrane. This is Probable transport accessory protein MmpS5 (mmpS5) from Mycobacterium bovis (strain ATCC BAA-935 / AF2122/97).